A 219-amino-acid polypeptide reads, in one-letter code: MYDNALHIRHLGKQDYESVWHAMQHYTDNRDENSQDEIWIVEHTPVFTQGQAGKSEHILNPGDIPVIQVDRGGQVTYHGPGQLVVYPLLDIKRLKIGVRQLVTHIEQSIINMLKRYQIEAYAKADAPGVYVEERKIASLGLRIRKGCSFHGLALNVDMDMSPFQRINPCGYAGMEMIQCKQLGGPQTVEEAGRQLIETLSQELGLDKLVHHQGLPESYE.

Residues 32 to 207 (ENSQDEIWIV…TLSQELGLDK (176 aa)) enclose the BPL/LPL catalytic domain. Substrate-binding positions include 71–78 (RGGQVTYH), 138–140 (SLG), and 151–153 (GLA). Catalysis depends on Cys-169, which acts as the Acyl-thioester intermediate.

It belongs to the LipB family.

The protein localises to the cytoplasm. The enzyme catalyses octanoyl-[ACP] + L-lysyl-[protein] = N(6)-octanoyl-L-lysyl-[protein] + holo-[ACP] + H(+). It functions in the pathway protein modification; protein lipoylation via endogenous pathway; protein N(6)-(lipoyl)lysine from octanoyl-[acyl-carrier-protein]: step 1/2. In terms of biological role, catalyzes the transfer of endogenously produced octanoic acid from octanoyl-acyl-carrier-protein onto the lipoyl domains of lipoate-dependent enzymes. Lipoyl-ACP can also act as a substrate although octanoyl-ACP is likely to be the physiological substrate. This Shewanella halifaxensis (strain HAW-EB4) protein is Octanoyltransferase.